A 778-amino-acid chain; its full sequence is Endonuclease MutS2 (778 aa).

Glycine 328–threonine 335 serves as a coordination point for ATP. A Smr domain is found at leucine 702–lysine 777.

The protein belongs to the DNA mismatch repair MutS family. MutS2 subfamily. In terms of assembly, homodimer. Binds to stalled ribosomes, contacting rRNA.

In terms of biological role, endonuclease that is involved in the suppression of homologous recombination and thus may have a key role in the control of bacterial genetic diversity. Acts as a ribosome collision sensor, splitting the ribosome into its 2 subunits. Detects stalled/collided 70S ribosomes which it binds and splits by an ATP-hydrolysis driven conformational change. Acts upstream of the ribosome quality control system (RQC), a ribosome-associated complex that mediates the extraction of incompletely synthesized nascent chains from stalled ribosomes and their subsequent degradation. Probably generates substrates for RQC. In Streptococcus pneumoniae (strain ATCC 700669 / Spain 23F-1), this protein is Endonuclease MutS2.